The primary structure comprises 316 residues: 2,3-dihydroxyphenylpropionate/2,3-dihydroxicinnamic acid 1,2-dioxygenase (316 aa).

The active-site Proton donor is histidine 115. Residue histidine 179 is the Proton acceptor of the active site.

Belongs to the LigB/MhpB extradiol dioxygenase family. In terms of assembly, homotetramer. It depends on Fe(2+) as a cofactor.

It catalyses the reaction 3-(2,3-dihydroxyphenyl)propanoate + O2 = (2Z,4E)-2-hydroxy-6-oxonona-2,4-dienedioate + H(+). The catalysed reaction is (2E)-3-(2,3-dihydroxyphenyl)prop-2-enoate + O2 = (2Z,4E,7E)-2-hydroxy-6-oxonona-2,4,7-trienedioate + H(+). The protein operates within aromatic compound metabolism; 3-phenylpropanoate degradation. In terms of biological role, catalyzes the non-heme iron(II)-dependent oxidative cleavage of 2,3-dihydroxyphenylpropionic acid and 2,3-dihydroxicinnamic acid into 2-hydroxy-6-ketononadienedioate and 2-hydroxy-6-ketononatrienedioate, respectively. The chain is 2,3-dihydroxyphenylpropionate/2,3-dihydroxicinnamic acid 1,2-dioxygenase from Paraburkholderia xenovorans (strain LB400).